Consider the following 557-residue polypeptide: Formate--tetrahydrofolate ligase 2 (557 aa).

66-73 (TPAGEGKT) is an ATP binding site.

The protein belongs to the formate--tetrahydrofolate ligase family.

It catalyses the reaction (6S)-5,6,7,8-tetrahydrofolate + formate + ATP = (6R)-10-formyltetrahydrofolate + ADP + phosphate. The protein operates within one-carbon metabolism; tetrahydrofolate interconversion. The chain is Formate--tetrahydrofolate ligase 2 from Streptococcus pyogenes serotype M6 (strain ATCC BAA-946 / MGAS10394).